The following is a 104-amino-acid chain: Large ribosomal subunit protein uL24 (104 aa).

Residues 82-104 (RVGYRFDENGKKVRVSRRNGKDI) are disordered. The span at 93 to 104 (KVRVSRRNGKDI) shows a compositional bias: basic residues.

The protein belongs to the universal ribosomal protein uL24 family. As to quaternary structure, part of the 50S ribosomal subunit.

Functionally, one of two assembly initiator proteins, it binds directly to the 5'-end of the 23S rRNA, where it nucleates assembly of the 50S subunit. In terms of biological role, one of the proteins that surrounds the polypeptide exit tunnel on the outside of the subunit. This Corynebacterium glutamicum (strain R) protein is Large ribosomal subunit protein uL24.